The sequence spans 215 residues: Ceramide-1-phosphate transfer protein (215 aa).

Residues D57, K61, R107, R111, and H151 each coordinate an N-acylsphingoid base 1-phosphate.

The protein belongs to the GLTP family.

It localises to the cytoplasm. It is found in the cytosol. The protein localises to the golgi apparatus. The protein resides in the trans-Golgi network membrane. Its subcellular location is the cell membrane. It localises to the endosome membrane. It is found in the nucleus outer membrane. The catalysed reaction is N-(hexadecanoyl)-sphing-4-enine-1-phosphate(in) = N-(hexadecanoyl)-sphing-4-enine-1-phosphate(out). It catalyses the reaction N-(9Z-octadecenoyl)-sphing-4-enine-1-phosphate(in) = N-(9Z-octadecenoyl)-sphing-4-enine-1-phosphate(out). Functionally, mediates the intracellular transfer of ceramide-1-phosphate (C1P) between organelle membranes and the cell membrane. Required for normal structure of the Golgi stacks. Can bind phosphoceramides with a variety of aliphatic chains, but has a preference for lipids with saturated C16:0 or monounsaturated C18:1 aliphatic chains, and is inefficient with phosphoceramides containing lignoceryl (C24:0). Plays a role in the regulation of the cellular levels of ceramide-1-phosphate, and thereby contributes to the regulation of phospholipase PLA2G4A activity and the release of arachidonic acid. Has no activity with galactosylceramide, lactosylceramide, sphingomyelin, phosphatidylcholine, phosphatidic acid and ceramide. C1P transfer is stimulated by phosphatidylserine in C1P source vesicles. Regulates autophagy and pyroptosis, but not apoptosis. The polypeptide is Ceramide-1-phosphate transfer protein (cptp) (Xenopus laevis (African clawed frog)).